Here is a 363-residue protein sequence, read N- to C-terminus: UDP-3-O-acylglucosamine N-acyltransferase (363 aa).

The active-site Proton acceptor is the His266.

It belongs to the transferase hexapeptide repeat family. LpxD subfamily. As to quaternary structure, homotrimer.

It carries out the reaction a UDP-3-O-[(3R)-3-hydroxyacyl]-alpha-D-glucosamine + a (3R)-hydroxyacyl-[ACP] = a UDP-2-N,3-O-bis[(3R)-3-hydroxyacyl]-alpha-D-glucosamine + holo-[ACP] + H(+). Its pathway is bacterial outer membrane biogenesis; LPS lipid A biosynthesis. Its function is as follows. Catalyzes the N-acylation of UDP-3-O-acylglucosamine using 3-hydroxyacyl-ACP as the acyl donor. Is involved in the biosynthesis of lipid A, a phosphorylated glycolipid that anchors the lipopolysaccharide to the outer membrane of the cell. This chain is UDP-3-O-acylglucosamine N-acyltransferase, found in Bordetella parapertussis (strain 12822 / ATCC BAA-587 / NCTC 13253).